Here is a 307-residue protein sequence, read N- to C-terminus: Ras-related protein RabR (307 aa).

Residues 1 to 10 (MTTTTLLSES) are compositionally biased toward polar residues. Residues 1–45 (MTTTTLLSESTNNSNNTNNNTNNNTNNTMNNNNNNNNNNTIGNNN) form a disordered region. A compositionally biased stretch (low complexity) spans 11–45 (TNNSNNTNNNTNNNTNNTMNNNNNNNNNNTIGNNN). Position 61–68 (61–68 (GDEEVGKG)) interacts with GTP. The short motif at 83 to 92 (ENLYNIEVDR) is the Effector region element. 122-126 (NFHMH) contacts GTP. The segment covering 175-185 (NFNCQSNSRNS) has biased composition (low complexity). A disordered region spans residues 175–223 (NFNCQSNSRNSTNYNRHSVGNHCPNSPQKGEKENNTHSSTAPPAPPPLP). A compositionally biased stretch (polar residues) spans 186-202 (TNYNRHSVGNHCPNSPQ). 230-233 (NKCD) contributes to the GTP binding site. At Cys-304 the chain carries Cysteine methyl ester. A lipid anchor (S-geranylgeranyl cysteine) is attached at Cys-304. Residues 305–307 (NLM) constitute a propeptide, removed in mature form.

This sequence belongs to the small GTPase superfamily. Rab family.

The protein resides in the cell membrane. The polypeptide is Ras-related protein RabR (rabR) (Dictyostelium discoideum (Social amoeba)).